We begin with the raw amino-acid sequence, 286 residues long: Protein HEXIM2 (286 aa).

The segment covering 1-11 has biased composition (polar residues); sequence MMATPNQTACN. A disordered region spans residues 1-195; the sequence is MMATPNQTAC…GEFQRKDFSE (195 aa). Phosphoserine is present on S29. Phosphothreonine is present on T32. Position 39 is a phosphoserine (S39). At T46 the chain carries Phosphothreonine. 5 positions are modified to phosphoserine: S51, S53, S71, S76, and S81. The span at 68–78 shows a compositional bias: polar residues; the sequence is NSRSPRTQSPG. Residues 87–103 show a composition bias toward basic residues; that stretch reads ARKKHRRRPSKRKRHWR. The span at 113 to 132 shows a compositional bias: basic and acidic residues; that stretch reads KQQRDERQSQRASRVREEMF. The segment at 140-143 is interaction with P-TEFb; that stretch reads PYNT. Over residues 178-195 the composition is skewed to basic and acidic residues; it reads SDGRGRAHGEFQRKDFSE. The stretch at 207 to 277 forms a coiled coil; that stretch reads GRSKQELVRD…QENQMWNREG (71 aa). The tract at residues 226 to 286 is interaction with CCNT1, HEXIM1 and HEXIM2; that stretch reads QAEEETRRLQ…GCRCDEEPGT (61 aa).

Belongs to the HEXIM family. Homooligomer and heterooligomer with HEXIM1; probably dimeric. Core component of the 7SK RNP complex, at least composed of 7SK RNA, LARP7, MEPCE, HEXIM1 (or HEXIM2) and P-TEFb (composed of CDK9 and CCNT1/cyclin-T1). Interacts with CCNT2. In terms of tissue distribution, ubiquitously expressed with higher expression in testis. HEXIM1 and HEXIM2 are differentially expressed.

Its subcellular location is the nucleus. Transcriptional regulator which functions as a general RNA polymerase II transcription inhibitor. Core component of the 7SK RNP complex: in cooperation with 7SK snRNA sequesters P-TEFb in a large inactive 7SK snRNP complex preventing RNA polymerase II phosphorylation and subsequent transcriptional elongation. This Homo sapiens (Human) protein is Protein HEXIM2 (HEXIM2).